The chain runs to 452 residues: Coproporphyrinogen III oxidase (452 aa).

Residues 10-15 (GGGISG), 36-37 (EP), 58-61 (GAEA), V242, W390, and 426-428 (IGV) each bind FAD.

This sequence belongs to the protoporphyrinogen/coproporphyrinogen oxidase family. Coproporphyrinogen III oxidase subfamily. It depends on FAD as a cofactor.

The protein localises to the cytoplasm. It catalyses the reaction coproporphyrinogen III + 3 O2 = coproporphyrin III + 3 H2O2. Its pathway is porphyrin-containing compound metabolism; protoheme biosynthesis. In terms of biological role, involved in coproporphyrin-dependent heme b biosynthesis. Catalyzes the oxidation of coproporphyrinogen III to coproporphyrin III. The chain is Coproporphyrinogen III oxidase from Mycobacterium bovis (strain ATCC BAA-935 / AF2122/97).